Here is a 1169-residue protein sequence, read N- to C-terminus: Protein MBD-R2 (1169 aa).

The THAP-type zinc finger occupies 5 to 59 (CCVANCPSTSRLLEHNGVTYHSFPLDPIIRAIWIKNSRISLERQITKSVLVCSRH). Disordered stretches follow at residues 99–122 (RALQ…STND), 140–211 (SAER…KYSN), and 347–394 (AEEG…CAPQ). Polar residues predominate over residues 107 to 122 (EGTTETPGNAQSSTND). Over residues 140–160 (SAERKATEEGKTGKAADDVKN) the composition is skewed to basic and acidic residues. Positions 190-202 (PAPGSASSSNSPL) are enriched in low complexity. The span at 353–363 (KSPTPVGTPVS) shows a compositional bias: polar residues. The 70-residue stretch at 445–514 (KPTVIVQDWR…DVYDFSIHRR (70 aa)) folds into the MBD domain. A disordered region spans residues 527 to 565 (GYNPQPPPKPRPMDVSMNSTLDQSITSQHSLPSTPMPVK). The span at 542-559 (SMNSTLDQSITSQHSLPS) shows a compositional bias: polar residues. Residues 640–665 (YVCPREDCAKTYRKEDFLLIHIRHYH) form a C2H2-type zinc finger. The interval 714-890 (QDLQQSRSFK…INAALAPPPA (177 aa)) is disordered. The segment covering 726 to 742 (SVSATATSSTPSDITPT) has biased composition (low complexity). Over residues 774-784 (PTQSFNPSLSR) the composition is skewed to polar residues. Residues 798-810 (SGSRKSNRQRSQR) are compositionally biased toward basic residues. 2 stretches are compositionally biased toward polar residues: residues 853 to 862 (AATTPISSID) and 869 to 881 (SVST…QTDI).

As to quaternary structure, component of the non-specific lethal (NLS) histone acetyltransferase complex at least composed of mof, nls1, dgt1/NSL2, Rcd1/NSL3, Rcd5/MCRS2, MBD-R2 and wds.

The protein resides in the nucleus. Its subcellular location is the chromosome. Functionally, component of the non-specific lethal (NLS) complex, a multiprotein complex that promotes expression of housekeeping genes on X chromosome and autosomes. In Drosophila melanogaster (Fruit fly), this protein is Protein MBD-R2.